The sequence spans 249 residues: 2,3,4,5-tetrahydropyridine-2,6-dicarboxylate N-acetyltransferase (249 aa).

It belongs to the transferase hexapeptide repeat family. DapH subfamily.

The catalysed reaction is (S)-2,3,4,5-tetrahydrodipicolinate + acetyl-CoA + H2O = L-2-acetamido-6-oxoheptanedioate + CoA. Its pathway is amino-acid biosynthesis; L-lysine biosynthesis via DAP pathway; LL-2,6-diaminopimelate from (S)-tetrahydrodipicolinate (acetylase route): step 1/3. Its function is as follows. Catalyzes the transfer of an acetyl group from acetyl-CoA to tetrahydrodipicolinate. This chain is 2,3,4,5-tetrahydropyridine-2,6-dicarboxylate N-acetyltransferase, found in Fervidobacterium nodosum (strain ATCC 35602 / DSM 5306 / Rt17-B1).